The following is a 154-amino-acid chain: 6,7-dimethyl-8-ribityllumazine synthase (154 aa).

5-amino-6-(D-ribitylamino)uracil contacts are provided by residues Phe15, 47–49 (TFD), and 71–73 (AVI). Residue 76–77 (ET) participates in (2S)-2-hydroxy-3-oxobutyl phosphate binding. Residue His79 is the Proton donor of the active site. Leu104 lines the 5-amino-6-(D-ribitylamino)uracil pocket. Arg119 provides a ligand contact to (2S)-2-hydroxy-3-oxobutyl phosphate.

This sequence belongs to the DMRL synthase family.

The catalysed reaction is (2S)-2-hydroxy-3-oxobutyl phosphate + 5-amino-6-(D-ribitylamino)uracil = 6,7-dimethyl-8-(1-D-ribityl)lumazine + phosphate + 2 H2O + H(+). It participates in cofactor biosynthesis; riboflavin biosynthesis; riboflavin from 2-hydroxy-3-oxobutyl phosphate and 5-amino-6-(D-ribitylamino)uracil: step 1/2. Functionally, catalyzes the formation of 6,7-dimethyl-8-ribityllumazine by condensation of 5-amino-6-(D-ribitylamino)uracil with 3,4-dihydroxy-2-butanone 4-phosphate. This is the penultimate step in the biosynthesis of riboflavin. The sequence is that of 6,7-dimethyl-8-ribityllumazine synthase from Saccharolobus solfataricus (strain ATCC 35092 / DSM 1617 / JCM 11322 / P2) (Sulfolobus solfataricus).